We begin with the raw amino-acid sequence, 202 residues long: Securin (202 aa).

Residues 1 to 92 (MATLIYVDKE…QKQPSFSAKK (92 aa)) are disordered. At alanine 2 the chain carries N-acetylalanine. Residues 61 to 64 (RKAL) carry the D-box motif. 2 short sequence motifs (TEK-box) span residues 71–73 (TEK) and 94–96 (TEK). An SH3-binding motif is present at residues 163 to 173 (XPSPVKMPSPP). Serine 165 carries the phosphoserine; by CDK1 modification.

Belongs to the securin family. Interacts with RPS10 and DNAJA1. Interacts with the caspase-like ESPL1, and prevents its protease activity probably by covering its active site. Interacts with TP53 and blocks its activity probably by blocking its binding to DNA. Interacts with the Ku 70 kDa subunit of ds-DNA kinase. Interacts with PTTG1IP. In terms of processing, phosphorylated at Ser-165 by CDK1 during mitosis. Phosphorylated in vitro by ds-DNA kinase. Post-translationally, ubiquitinated through 'Lys-11' linkage of ubiquitin moieties by the anaphase promoting complex (APC) at the onset of anaphase, conducting to its degradation. 'Lys-11'-linked ubiquitination is mediated by the E2 ligase UBE2C/UBCH10.

The protein localises to the cytoplasm. It localises to the nucleus. Its function is as follows. Regulatory protein, which plays a central role in chromosome stability, in the p53/TP53 pathway, and DNA repair. Probably acts by blocking the action of key proteins. During the mitosis, it blocks Separase/ESPL1 function, preventing the proteolysis of the cohesin complex and the subsequent segregation of the chromosomes. At the onset of anaphase, it is ubiquitinated, conducting to its destruction and to the liberation of ESPL1. Its function is however not limited to a blocking activity, since it is required to activate ESPL1. Negatively regulates the transcriptional activity and related apoptosis activity of TP53. The negative regulation of TP53 may explain the strong transforming capability of the protein when it is overexpressed. May also play a role in DNA repair via its interaction with Ku, possibly by connecting DNA damage-response pathways with sister chromatid separation. The sequence is that of Securin (PTTG1) from Pan troglodytes (Chimpanzee).